The chain runs to 276 residues: CTD small phosphatase-like protein (276 aa).

Residues 1 to 31 form a disordered region; it reads MDGPAIITQVTNPKEDEARSPVAGEKASQRN. Residues 102–260 enclose the FCP1 homology domain; the sequence is LDYGKKCVVI…LDLIPFFEGL (159 aa). D112 functions as the 4-aspartylphosphate intermediate in the catalytic mechanism. Mg(2+) contacts are provided by D112, D114, and N223. The active-site Proton donor is D114.

In terms of assembly, monomer. Interacts with REST. The cofactor is Mg(2+).

It localises to the nucleus. The catalysed reaction is O-phospho-L-seryl-[protein] + H2O = L-seryl-[protein] + phosphate. The enzyme catalyses O-phospho-L-threonyl-[protein] + H2O = L-threonyl-[protein] + phosphate. In terms of biological role, preferentially catalyzes the dephosphorylation of 'Ser-5' within the tandem 7 residue repeats in the C-terminal domain (CTD) of the largest RNA polymerase II subunit POLR2A. Negatively regulates RNA polymerase II transcription, possibly by controlling the transition from initiation/capping to processive transcript elongation. Recruited by REST to neuronal genes that contain RE-1 elements, leading to neuronal gene silencing in non-neuronal cells. This chain is CTD small phosphatase-like protein (Ctdspl), found in Mus musculus (Mouse).